The primary structure comprises 314 residues: GTP cyclohydrolase FolE2 (314 aa).

The tract at residues aspartate 290–arginine 314 is disordered. Residues alanine 291 to glutamine 305 are compositionally biased toward low complexity.

It belongs to the GTP cyclohydrolase IV family.

The enzyme catalyses GTP + H2O = 7,8-dihydroneopterin 3'-triphosphate + formate + H(+). It participates in cofactor biosynthesis; 7,8-dihydroneopterin triphosphate biosynthesis; 7,8-dihydroneopterin triphosphate from GTP: step 1/1. Converts GTP to 7,8-dihydroneopterin triphosphate. This is GTP cyclohydrolase FolE2 from Pseudomonas putida (strain ATCC 700007 / DSM 6899 / JCM 31910 / BCRC 17059 / LMG 24140 / F1).